The sequence spans 126 residues: Ribonuclease P protein component (126 aa).

The protein belongs to the RnpA family. Consists of a catalytic RNA component (M1 or rnpB) and a protein subunit.

The enzyme catalyses Endonucleolytic cleavage of RNA, removing 5'-extranucleotides from tRNA precursor.. Functionally, RNaseP catalyzes the removal of the 5'-leader sequence from pre-tRNA to produce the mature 5'-terminus. It can also cleave other RNA substrates such as 4.5S RNA. The protein component plays an auxiliary but essential role in vivo by binding to the 5'-leader sequence and broadening the substrate specificity of the ribozyme. The sequence is that of Ribonuclease P protein component from Brevibacillus brevis (strain 47 / JCM 6285 / NBRC 100599).